The sequence spans 88 residues: Cell division topological specificity factor (88 aa).

Belongs to the MinE family.

Prevents the cell division inhibition by proteins MinC and MinD at internal division sites while permitting inhibition at polar sites. This ensures cell division at the proper site by restricting the formation of a division septum at the midpoint of the long axis of the cell. The sequence is that of Cell division topological specificity factor from Carboxydothermus hydrogenoformans (strain ATCC BAA-161 / DSM 6008 / Z-2901).